A 41-amino-acid polypeptide reads, in one-letter code: Large ribosomal subunit protein bL36 (41 aa).

This sequence belongs to the bacterial ribosomal protein bL36 family.

The sequence is that of Large ribosomal subunit protein bL36 from Phenylobacterium zucineum (strain HLK1).